The primary structure comprises 459 residues: FBD-associated F-box protein At1g61320 (459 aa).

The tract at residues 1-25 (MAPPTKRTRVEMAESSNKRMKPSET) is disordered. Positions 21–69 (KPSETVPEDVLELMMSTYLPVQSLLTTRVLSKRFRETEVRSLDLDFSGI) constitute an F-box domain. The 33-residue stretch at 396–428 (VKIIGYKGHWHELDIVEFFVKNAPSLKRLELQM) folds into the FBD domain.

The sequence is that of FBD-associated F-box protein At1g61320 from Arabidopsis thaliana (Mouse-ear cress).